We begin with the raw amino-acid sequence, 549 residues long: Myotubularin-related protein 9 (549 aa).

Position 1 is an N-acetylmethionine (Met-1). Residues 4 to 99 (AELIKTPRVD…LNIASSIEAL (96 aa)) form the GRAM domain. Residues 123–498 (GWHSFLPEQE…QSLPLWEGIF (376 aa)) form the Myotubularin phosphatase domain. A coiled-coil region spans residues 508-542 (LDEAYEEMVNIIEYNKELQAKVNILRRQLAELETE). Ser-548 carries the post-translational modification Phosphoserine.

This sequence belongs to the protein-tyrosine phosphatase family. Non-receptor class myotubularin subfamily. Homodimer. Heterodimer (via C-terminus) with lipid phosphatase MTMR6 (via C-terminus). Heterodimer (via coiled coil domain) with lipid phosphatase MTMR7 (via C-terminus). Heterodimer with lipid phosphatase MTMR8. In terms of tissue distribution, expressed in many tissues.

It localises to the cytoplasm. The protein resides in the cell projection. The protein localises to the ruffle membrane. It is found in the perinuclear region. Its subcellular location is the endoplasmic reticulum. Functionally, acts as an adapter for myotubularin-related phosphatases. Increases lipid phosphatase MTMR6 catalytic activity, specifically towards phosphatidylinositol 3,5-bisphosphate and MTMR6 binding affinity for phosphorylated phosphatidylinositols. Positively regulates lipid phosphatase MTMR7 catalytic activity. Increases MTMR8 catalytic activity towards phosphatidylinositol 3-phosphate. The formation of the MTMR6-MTMR9 complex, stabilizes both MTMR6 and MTMR9 protein levels. Stabilizes MTMR8 protein levels. Plays a role in the late stages of macropinocytosis possibly by regulating MTMR6-mediated dephosphorylation of phosphatidylinositol 3-phosphate in membrane ruffles. Negatively regulates autophagy, in part via its association with MTMR8. Negatively regulates DNA damage-induced apoptosis, in part via its association with MTMR6. Does not bind mono-, di- and tri-phosphorylated phosphatidylinositols, phosphatidic acid and phosphatidylserine. The sequence is that of Myotubularin-related protein 9 (MTMR9) from Homo sapiens (Human).